Consider the following 380-residue polypeptide: Cytochrome b (380 aa).

4 helical membrane-spanning segments follow: residues 34-54 (FGSL…LLAM), 78-99 (WLIR…YLHI), 114-134 (WNTG…GYVL), and 179-199 (FFAL…IHLT). Positions 84 and 98 each coordinate heme b. Heme b is bound by residues H183 and H197. H202 is an a ubiquinone binding site. 4 helical membrane-spanning segments follow: residues 227-247 (LKDA…ALFS), 289-309 (LGGV…PLLH), 321-341 (LSQL…WIGS), and 348-368 (FIII…ILFP).

The protein belongs to the cytochrome b family. In terms of assembly, the cytochrome bc1 complex contains 11 subunits: 3 respiratory subunits (MT-CYB, CYC1 and UQCRFS1), 2 core proteins (UQCRC1 and UQCRC2) and 6 low-molecular weight proteins (UQCRH/QCR6, UQCRB/QCR7, UQCRQ/QCR8, UQCR10/QCR9, UQCR11/QCR10 and a cleavage product of UQCRFS1). This cytochrome bc1 complex then forms a dimer. The cofactor is heme b.

Its subcellular location is the mitochondrion inner membrane. Functionally, component of the ubiquinol-cytochrome c reductase complex (complex III or cytochrome b-c1 complex) that is part of the mitochondrial respiratory chain. The b-c1 complex mediates electron transfer from ubiquinol to cytochrome c. Contributes to the generation of a proton gradient across the mitochondrial membrane that is then used for ATP synthesis. The chain is Cytochrome b (MT-CYB) from Oceanodroma tethys (Wedge-rumped storm-petrel).